The chain runs to 4239 residues: Tenellin synthetase (4239 aa).

The region spanning 15-454 is the Ketosynthase family 3 (KS3) domain; that stretch reads SEPIAIIGSA…GTNAHAIIER (440 aa). Catalysis depends on for beta-ketoacyl synthase activity residues Cys-189, His-326, and His-374. Residues 589-923 form a malonyl-CoA:ACP transacylase (MAT) domain region; that stretch reads VFTGQGAQWP…ANDAVAFSTA (335 aa). The tract at residues 993–1135 is N-terminal hotdog fold; that stretch reads HELLGRRTPD…GRIAVQLGAK (143 aa). Positions 993 to 1310 are dehydratase (DH) domain; sequence HELLGRRTPD…GFEVRAVGEP (318 aa). Residues 993–1313 form the PKS/mFAS DH domain; sequence HELLGRRTPD…VRAVGEPDAS (321 aa). The active-site Proton acceptor; for dehydratase activity is the His-1025. The interval 1158–1313 is C-terminal hotdog fold; it reads LQQLDCEKLY…VRAVGEPDAS (156 aa). Residue Asp-1217 is the Proton donor; for dehydratase activity of the active site. Residues 1459-1652 form a methyltransferase (MT) domain region; that stretch reads RLYTEDKGMH…FSGVDHIVHD (194 aa). The segment at 2209 to 2382 is ketoreductase (KR) domain; the sequence is TYLMVGAAGG…AASIIHVGHV (174 aa). The 81-residue stretch at 2502–2582 folds into the Carrier 1 domain; sequence EAAVAALKGF…QLSALAAKLA (81 aa). An O-(pantetheine 4'-phosphoryl)serine modification is found at Ser-2542. Disordered regions lie at residues 2587-2629 and 2642-2712; these read KKRA…EIAQ and LEAS…FFTQ. 2 stretches are compositionally biased toward polar residues: residues 2648-2662 and 2670-2681; these read GGSS…SSVS and ESTLQSSDNNGE. Positions 2682–2698 are enriched in low complexity; the sequence is STPSKSSNCNSDSGSDN. The tract at residues 2723 to 3169 is condensation (C) domain; it reads REAPMSPAQS…SAQSVGDCVV (447 aa). The tract at residues 3203–3614 is adenylation (A) (KR) domain; that stretch reads CQQHSTKSAI…DGTLLCFGRI (412 aa). A disordered region spans residues 3728–3752; the sequence is EAAAATSPSNNNINNNTPSGGGGEK. Residues 3729–3745 are compositionally biased toward low complexity; it reads AAAATSPSNNNINNNTP. Residues 3751–3835 form the Carrier 2 domain; sequence EKMTVRQGEL…GMARCVAEQR (85 aa). Position 3795 is an O-(pantetheine 4'-phosphoryl)serine (Ser-3795). Residues 3862–3892 form a disordered region; the sequence is EKLQHSSASSSSSSSSSSSAGSSSTQRPRKT. Low complexity predominate over residues 3867–3885; it reads SSASSSSSSSSSSSAGSSS. Residues 3899–4145 form a reductase (RED) domain region; sequence LTGATGFLGG…LDFGQVDKVV (247 aa).

This sequence in the C-terminal section; belongs to the NRP synthetase family.

It functions in the pathway secondary metabolite biosynthesis. In terms of biological role, hybrid PKS-NRPS synthetase; part of the gene cluster that mediates the biosynthesis of tenellin-type 2-pyridones, iron-chelating compounds involved in iron stress tolerance, competition with the natural competitor fungus Metarhizium robertsii and insect hosts infection. TenS catalyzes the assembly of the polyketide-amino acid backbone. Because tenS lacks a designated enoylreductase (ER) domain, the required activity is provided the enoyl reductase tenC. Upon formation of the polyketide backbone on the thiotemplate, the triketide is transferred to the NRPS module and linked to tyrosine to produce the pyrrolidine-2-dione intermediates, including pretellinin A, 11-hydropretellenin A, 12-hydropretellenin A, 13-hydropretellenin A, 14-hydropretellenin A, 12-oxopretellenin A and prototellinin D. The pathway begins with the assembly of the polyketide-amino acid backbone by the hybrid PKS-NRPS tenS with the help of the enoyl reductase tenC. These enzymes catalyze the synthesis of the pyrrolidine-2-dione intermediates pretellinin A, 11-hydropretellenin A, 12-hydropretellenin A, 13-hydropretellenin A, 14-hydropretellenin A, 12-oxopretellenin A and prototellinin D. The cytochrome P450 monooxygenase tenA then catalyzes an oxidative ring expansion of pretenellin A and 14-hydropretellenin A to form the 2-pyridone core, leading to pretenellin B and pyridovericin, respectively. The cytochrome P450 monooxygenase tenB is then required for the selective N-hydroxylation of the 2-pyridone nitrogen of yield tellinin and 15-hydroxytellenin (15-HT), respectively. The UDP-glucosyltransferase GT1 and the methyltransferase MT1, located outside the tenS gene cluster, contribute to the stepwise glycosylation and methylation of 15-HT to obtain the glycoside pyridovericin-N-O-(4-O-methyl-beta-D-glucopyranoside) (PMGP). Additional related compounds such as 1-O-methyl-15-HT, (8Z)-1-O-methyl-15-HT, and O-methyltenellin A are also produced but the enzymes involved in their biosynthesis have still to be determined. This chain is Tenellin synthetase, found in Beauveria bassiana (White muscardine disease fungus).